Reading from the N-terminus, the 295-residue chain is 2-dehydropantoate 2-reductase (295 aa).

NADP(+) is bound by residues 9 to 14, asparagine 100, and alanine 126; that span reads GPGAVG. Residue asparagine 100 coordinates substrate. The active-site Proton donor is the lysine 177. Substrate is bound by residues asparagine 181 and serine 246. Glutamate 258 contacts NADP(+).

This sequence belongs to the ketopantoate reductase family.

It localises to the cytoplasm. It catalyses the reaction (R)-pantoate + NADP(+) = 2-dehydropantoate + NADPH + H(+). The protein operates within cofactor biosynthesis; (R)-pantothenate biosynthesis; (R)-pantoate from 3-methyl-2-oxobutanoate: step 2/2. Functionally, catalyzes the NADPH-dependent reduction of ketopantoate into pantoic acid. This is 2-dehydropantoate 2-reductase from Mycobacterium tuberculosis (strain CDC 1551 / Oshkosh).